A 499-amino-acid polypeptide reads, in one-letter code: tRNA-specific adenosine deaminase 1 (499 aa).

Residues 63–498 (SMGTGTKCIG…IRNPPDYHQF (436 aa)) form the A to I editase domain. His87 is a binding site for Zn(2+). The Proton donor role is filled by Glu89. 1D-myo-inositol hexakisphosphate-binding residues include Arg93 and Arg94. Cys142 lines the Zn(2+) pocket. 2 disordered regions span residues 170–194 (PVQETENLEDSKDKRNCEDPASPVA) and 212–237 (HHGTQESGPVKPDVSSSDLTKEEPDA). Positions 178–187 (EDSKDKRNCE) are enriched in basic and acidic residues. The residue at position 191 (Ser191) is a Phosphoserine. Residue Cys294 coordinates Zn(2+). Lys297, Arg300, Lys430, and Lys466 together coordinate 1D-myo-inositol hexakisphosphate.

The protein belongs to the ADAT1 family. 1D-myo-inositol hexakisphosphate is required as a cofactor.

It carries out the reaction adenosine(37) in tRNA(Ala) + H2O + H(+) = inosine(37) in tRNA(Ala) + NH4(+). Specifically deaminates adenosine-37 to inosine in tRNA-Ala. The sequence is that of tRNA-specific adenosine deaminase 1 (Adat1) from Mus musculus (Mouse).